Reading from the N-terminus, the 315-residue chain is MDVLLSLPQPELFKTTVIPFLANRNIIKSEAILSNLHSIFYVAIFYHIWFLFGKWILFPHLVKWKLDYDQKHNVKKDEKTTSERQAQHYKKKYTSLINQSSVHLISLLQSIVVLYYSLKFLLDPKASAEPYQTSHSRVFTENRDTQVICIFAIGYFVWDIYISTMYSTFPFVVHGIISTVVFCIGLKPYIQYYAPVFLMFELSNPSLNFRWFGIKFLPQKSKFCSLLLLLNNLTLMVVFFAARIAWGWFQIGKLCYDFYQVRNEPGFLVFDTIVILAGNFVLDILNVIWFSTMVSVAAKVLKKGESVDKVTKNEQ.

The Cytoplasmic segment spans residues 1 to 38 (MDVLLSLPQPELFKTTVIPFLANRNIIKSEAILSNLHS). A helical transmembrane segment spans residues 39–59 (IFYVAIFYHIWFLFGKWILFP). Residues 60 to 101 (HLVKWKLDYDQKHNVKKDEKTTSERQAQHYKKKYTSLINQSS) are Lumenal-facing. In terms of domain architecture, TLC spans 95–302 (SLINQSSVHL…MVSVAAKVLK (208 aa)). Residues 102-122 (VHLISLLQSIVVLYYSLKFLL) traverse the membrane as a helical segment. The Cytoplasmic portion of the chain corresponds to 123–144 (DPKASAEPYQTSHSRVFTENRD). A helical membrane pass occupies residues 145 to 165 (TQVICIFAIGYFVWDIYISTM). The Lumenal segment spans residues 166–170 (YSTFP). Residues 171-190 (FVVHGIISTVVFCIGLKPYI) traverse the membrane as a helical segment. The Cytoplasmic segment spans residues 191–225 (QYYAPVFLMFELSNPSLNFRWFGIKFLPQKSKFCS). A helical membrane pass occupies residues 226-246 (LLLLLNNLTLMVVFFAARIAW). Over 247–264 (GWFQIGKLCYDFYQVRNE) the chain is Lumenal. A helical transmembrane segment spans residues 265–285 (PGFLVFDTIVILAGNFVLDIL). Topologically, residues 286–315 (NVIWFSTMVSVAAKVLKKGESVDKVTKNEQ) are cytoplasmic.

The protein resides in the endoplasmic reticulum membrane. This is an uncharacterized protein from Saccharomyces cerevisiae (strain ATCC 204508 / S288c) (Baker's yeast).